Consider the following 324-residue polypeptide: Olfactory receptor 5T17 (324 aa).

At 1–37 (MPRTPSYTNTKTTQVNNVTEITVFILLGFTDDVDMNI) the chain is on the extracellular side. The N-linked (GlcNAc...) asparagine glycan is linked to Asn-17. A helical transmembrane segment spans residues 38–58 (FLFILFLAIYVVTLIGNLGLV). Over 59–66 (VLVIEDSR) the chain is Cytoplasmic. A helical transmembrane segment spans residues 67–87 (LHNPMYYFLTVLSSLDACFSS). The Extracellular segment spans residues 88-111 (VLTPKMLVNFLSKNKSISFAGCAT). Asn-101 carries N-linked (GlcNAc...) asparagine glycosylation. A disulfide bridge links Cys-109 with Cys-201. Residues 112 to 132 (QMLLFVTFGTTECFLLAAMAY) form a helical membrane-spanning segment. Over 133–145 (DRYLAIYSPLLYA) the chain is Cytoplasmic. A helical membrane pass occupies residues 146–166 (VRMSPRVYVPLIIASYTGGIL). Over 167–208 (HATIHTVATFSLSFCGSNEIRHVFCDIPPLLALSCSDTHLNQ) the chain is Extracellular. The chain crosses the membrane as a helical span at residues 209–229 (LLLFYCAGSIELITILIVLVS). The Cytoplasmic segment spans residues 230–249 (YGFVLLAILKINSAEGRRKI). The chain crosses the membrane as a helical span at residues 250–270 (FSTCGAHLTGVSIFHGTILFM). The Extracellular segment spans residues 271–283 (YVRPSSNYTLEQD). An N-linked (GlcNAc...) asparagine glycan is attached at Asn-277. A helical transmembrane segment spans residues 284-304 (MVVSTFYTIVIPMLNPIIYSL). Over 305–324 (RNKDVKEAMRKLLKRKLVHE) the chain is Cytoplasmic.

This sequence belongs to the G-protein coupled receptor 1 family.

The protein resides in the cell membrane. In terms of biological role, potential odorant receptor. The protein is Olfactory receptor 5T17 of Mus musculus (Mouse).